The following is a 231-amino-acid chain: CLAVATA3/ESR (CLE)-related protein 4B-1 (231 aa).

Positions 1–21 (MATNTMLCLLILSVVLALAFA) are cleaved as a signal peptide. Positions 21 to 83 (ATNKKGDEEP…SNLLPNNNWM (63 aa)) are required for secretion from the host cytoplasm to the host apoplasm. An N-linked (GlcNAc...) asparagine glycan is attached at Asn32. Positions 116-231 (RKTGMHSQRH…APAGPDPIHH (116 aa)) are disordered. 2 stretches are compositionally biased toward basic and acidic residues: residues 125–137 (HHEE…EKRV) and 144–221 (PIHH…EKRG). The stretch at 127-135 (EETTLEQEK) is one A-1 repeat. The 5 X approximate repeat A stretch occupies residues 127–219 (EETTLEQEKR…HEETTFEQEK (93 aa)). One copy of the CLE-1 repeat lies at 136 to 147 (RVAGAGPDPIHH). The tract at residues 136-231 (RVAGAGPDPI…APAGPDPIHH (96 aa)) is 5 X approximate repeat CLE. The A-2 repeat unit spans residues 148 to 156 (QDTTLEQEK). Residues 157–168 (RAVPAGPDPKHH) form a CLE-2 repeat. Residues 169–177 (EETTLEQEK) form an A-3 repeat. A CLE-3 repeat occupies 178–189 (RAVPAGPDPKHH). The A-4 repeat unit spans residues 190 to 198 (EETTLEQEK). One copy of the CLE-4 repeat lies at 199-210 (RAVPAGPDPKHH). Residues 211-219 (EETTFEQEK) form an A-5 repeat. The stretch at 220–231 (RGAPAGPDPIHH) is one CLE-5 repeat.

This sequence belongs to the CLV3/ESR signal peptide family. As to expression, highly expressed exclusively within the dorsal esophageal gland cell during syncytium formation in host plants.

It is found in the secreted. It localises to the host cytoplasm. Its subcellular location is the host extracellular space. The protein localises to the extracellular space. The protein resides in the apoplast. Functionally, mimics host plant CLE extracellular signal peptides that regulate cell fate. May play a role in the differentiation or division of feeding cells (syncytia) induced in plant roots during infection. The protein is CLAVATA3/ESR (CLE)-related protein 4B-1 (CLE-4B-1) of Globodera rostochiensis (Golden nematode worm).